A 256-amino-acid chain; its full sequence is Chalcone--flavanone isomerase (256 aa).

Substrate-binding residues include Thr51, Asn116, and Ser193. The interval 219–256 is disordered; the sequence is NSTTDLNESENEKLNSNEVSKEEKPLQVEKSAFKEVEV. The span at 228-256 shows a compositional bias: basic and acidic residues; that stretch reads ENEKLNSNEVSKEEKPLQVEKSAFKEVEV.

This sequence belongs to the chalcone isomerase family. As to expression, nodules.

The enzyme catalyses a chalcone = a flavanone.. Its pathway is secondary metabolite biosynthesis; flavonoid biosynthesis. Functionally, catalyzes the intramolecular cyclization of bicyclic chalcones into tricyclic (S)-flavanones. Responsible for the isomerization of 4,2',4',6'-tetrahydroxychalcone (also termed chalcone) into naringenin. This chain is Chalcone--flavanone isomerase (CHI), found in Elaeagnus umbellata (Autumn olive).